We begin with the raw amino-acid sequence, 1423 residues long: Serum albumin SDS-1 (1423 aa).

Residues 1 to 23 form the signal peptide; sequence MGKAMLKLCITLMVLVFSGTAES. A propeptide spanning residues 24–29 is cleaved from the precursor; the sequence is KGVMRR. Albumin domains follow at residues 29-230, 231-426, 427-608, 609-811, 812-1031, 1032-1226, and 1227-1422; these read REDE…EDFK, HKLT…EFKS, EVEK…SDFK, MDVE…SQAR, QEAL…HTIH, MEIR…AIEK, and VIKD…AIKS. His36 contributes to the Cu cation binding site. Disulfide bonds link Cys42-Cys88, Cys87-Cys96, Cys109-Cys125, Cys124-Cys135, Cys167-Cys212, Cys211-Cys221, Cys244-Cys290, Cys289-Cys298, Cys311-Cys327, Cys326-Cys337, Cys363-Cys408, Cys407-Cys416, Cys439-Cys485, Cys484-Cys493, Cys506-Cys522, and Cys521-Cys532. The N-linked (GlcNAc...) asparagine glycan is linked to Asn490. N-linked (GlcNAc...) asparagine glycosylation occurs at Asn541. Intrachain disulfides connect Cys556–Cys601, Cys622–Cys668, Cys667–Cys676, Cys689–Cys705, Cys704–Cys715, Cys747–Cys792, Cys791–Cys802, Cys825–Cys871, Cys870–Cys879, Cys892–Cys907, and Cys906–Cys947. N-linked (GlcNAc...) asparagine glycosylation occurs at Asn652. Asn754 carries N-linked (GlcNAc...) asparagine glycosylation. 2 N-linked (GlcNAc...) asparagine glycosylation sites follow: Asn908 and Asn911. The interval 910–936 is disordered; it reads SNTSTTTSTTTSTTTSTTTSTTTSTTS. 7 tandem repeats follow at residues 913–916, 917–920, 921–924, 925–928, 929–932, 933–935, and 936–939. Residues 913-939 form a 7 X 4 AA tandem repeats of S-T-T-T region; sequence STTTSTTTSTTTSTTTSTTTSTTSTTT. N-linked (GlcNAc...) asparagine glycosylation occurs at Asn954. Cystine bridges form between Cys969–Cys1014, Cys1013–Cys1022, Cys1045–Cys1091, Cys1090–Cys1099, Cys1112–Cys1128, Cys1127–Cys1138, Cys1163–Cys1208, and Cys1207–Cys1216. Residue Asn1070 is glycosylated (N-linked (GlcNAc...) asparagine). N-linked (GlcNAc...) asparagine glycosylation occurs at Asn1236. 6 disulfides stabilise this stretch: Cys1239–Cys1285, Cys1284–Cys1291, Cys1304–Cys1320, Cys1319–Cys1330, Cys1359–Cys1404, and Cys1403–Cys1412.

Belongs to the ALB/AFP/VDB family. As to expression, plasma.

It localises to the secreted. In terms of biological role, serum albumin, the main protein of plasma, has a good binding capacity for water, Ca(2+), Na(+), K(+), fatty acids, hormones, bilirubin and drugs. Its main function is the regulation of the colloidal osmotic pressure of blood. The protein is Serum albumin SDS-1 (SDS-1) of Petromyzon marinus (Sea lamprey).